A 153-amino-acid polypeptide reads, in one-letter code: Aspartate carbamoyltransferase regulatory chain (153 aa).

Cysteine 109, cysteine 114, cysteine 138, and cysteine 141 together coordinate Zn(2+).

It belongs to the PyrI family. In terms of assembly, contains catalytic and regulatory chains. It depends on Zn(2+) as a cofactor.

In terms of biological role, involved in allosteric regulation of aspartate carbamoyltransferase. In Vibrio vulnificus (strain YJ016), this protein is Aspartate carbamoyltransferase regulatory chain.